We begin with the raw amino-acid sequence, 754 residues long: Endoribonuclease Dicer-like (754 aa).

The 120-residue stretch at 132 to 251 folds into the PAZ domain; sequence QLMCDAKRLS…LPPELCLLLP (120 aa). RNase III domains are found at residues 298-418 and 613-734; these read FAIT…TGPN and AQTV…LACG. Mn(2+) is bound by residues glutamate 336, aspartate 404, glutamate 407, glutamate 649, aspartate 720, and glutamate 723.

As to quaternary structure, homodimer. Mg(2+) is required as a cofactor. The cofactor is Mn(2+).

Its function is as follows. Involved in cleaving double-stranded RNA in the RNA interference (RNAi) pathway. It produces 21 to 23 bp dsRNAs (siRNAs) which target the selective destruction of homologous RNAs. This is Endoribonuclease Dicer-like from Giardia intestinalis (strain ATCC 50803 / WB clone C6) (Giardia lamblia).